We begin with the raw amino-acid sequence, 184 residues long: Tumor necrosis factor alpha-induced protein 8-like protein 2 (184 aa).

S3 is subject to Phosphoserine.

Belongs to the TNFAIP8 family. TNFAIP8L2 subfamily. May interact with CASP8; however, such result is unclear since could not reproduce the interaction with CASP8. Interacts with RAC1. Post-translationally, phosphorylated by TAK1/MAP3K7; this phosphorylation triggers association with BTRC and subsequent ubiquitination and degradation. Ubiquitinated in a BTRC-depdent manner; leading to degradation mediated through the proteasome pathway.

The protein resides in the cytoplasm. It localises to the nucleus. Its subcellular location is the lysosome. Acts as a negative regulator of innate and adaptive immunity by maintaining immune homeostasis. Plays a regulatory role in the Toll-like signaling pathway by determining the strength of LPS-induced signaling and gene expression. Inhibits TCR-mediated T-cell activation and negatively regulate T-cell function to prevent hyperresponsiveness. Also inhibits autolysosome formation via negatively modulating MTOR activation by interacting with RAC1 and promoting the disassociation of the RAC1-MTOR complex. Plays an essential role in NK-cell biology by acting as a checkpoint and displaying an expression pattern correlating with NK-cell maturation process and by negatively regulating NK-cell maturation and antitumor immunity. Mechanistically, suppresses IL-15-triggered mTOR activity in NK-cells. This Bos taurus (Bovine) protein is Tumor necrosis factor alpha-induced protein 8-like protein 2 (TNFAIP8L2).